The sequence spans 95 residues: Large ribosomal subunit protein bL28 (95 aa).

Belongs to the bacterial ribosomal protein bL28 family.

The polypeptide is Large ribosomal subunit protein bL28 (Zymomonas mobilis subsp. mobilis (strain ATCC 31821 / ZM4 / CP4)).